The following is a 304-amino-acid chain: Porphobilinogen deaminase (304 aa).

Residue C240 is modified to S-(dipyrrolylmethanemethyl)cysteine.

Belongs to the HMBS family. As to quaternary structure, monomer. Dipyrromethane is required as a cofactor.

It carries out the reaction 4 porphobilinogen + H2O = hydroxymethylbilane + 4 NH4(+). Its pathway is porphyrin-containing compound metabolism; protoporphyrin-IX biosynthesis; coproporphyrinogen-III from 5-aminolevulinate: step 2/4. Functionally, tetrapolymerization of the monopyrrole PBG into the hydroxymethylbilane pre-uroporphyrinogen in several discrete steps. The sequence is that of Porphobilinogen deaminase from Xanthomonas euvesicatoria pv. vesicatoria (strain 85-10) (Xanthomonas campestris pv. vesicatoria).